The sequence spans 477 residues: Ribosomal RNA small subunit methyltransferase F (477 aa).

S-adenosyl-L-methionine is bound by residues 125–131 (AAAPGSK), E149, D176, and D194. The active-site Nucleophile is C247.

This sequence belongs to the class I-like SAM-binding methyltransferase superfamily. RsmB/NOP family.

The protein localises to the cytoplasm. The catalysed reaction is cytidine(1407) in 16S rRNA + S-adenosyl-L-methionine = 5-methylcytidine(1407) in 16S rRNA + S-adenosyl-L-homocysteine + H(+). In terms of biological role, specifically methylates the cytosine at position 1407 (m5C1407) of 16S rRNA. The protein is Ribosomal RNA small subunit methyltransferase F of Klebsiella pneumoniae (strain 342).